Here is a 544-residue protein sequence, read N- to C-terminus: Flagellar hook-associated protein 1 (544 aa).

This sequence belongs to the flagella basal body rod proteins family.

It localises to the secreted. Its subcellular location is the bacterial flagellum. The polypeptide is Flagellar hook-associated protein 1 (flgK) (Buchnera aphidicola subsp. Schizaphis graminum (strain Sg)).